A 237-amino-acid polypeptide reads, in one-letter code: MRPSRRAPDELRPVSLERGVVKYAEGSCLVKFGDTHVLVTATLEDRLPPWLKGQGRGWITAEYGMLPRATLERTRREASAGKQTGRTVEIQRLIGRSLRTAIDLEALGERQITVDCDVLQADGGTRTASITGAWVALADCIKWMKTRNMLKTEVLRANVAAISCGIYNGTPVLDLDYAEDSEAETDANFVMTGDGRIIEVQGTAEKTPFTEAEFLALMALARKGVARLVDLQKMAVA.

Phosphate is bound by residues Arg86 and 124-126; that span reads GTR.

It belongs to the RNase PH family. Homohexameric ring arranged as a trimer of dimers.

The catalysed reaction is tRNA(n+1) + phosphate = tRNA(n) + a ribonucleoside 5'-diphosphate. Functionally, phosphorolytic 3'-5' exoribonuclease that plays an important role in tRNA 3'-end maturation. Removes nucleotide residues following the 3'-CCA terminus of tRNAs; can also add nucleotides to the ends of RNA molecules by using nucleoside diphosphates as substrates, but this may not be physiologically important. Probably plays a role in initiation of 16S rRNA degradation (leading to ribosome degradation) during starvation. This is Ribonuclease PH from Bradyrhizobium sp. (strain BTAi1 / ATCC BAA-1182).